A 1043-amino-acid polypeptide reads, in one-letter code: P3N-PIPO polyprotein (1043 aa).

The region spanning 219–362 is the Peptidase S30 domain; it reads KMNDQGVDML…RTMSHKIVHF (144 aa). Active-site for P1 proteinase activity residues include histidine 270, aspartate 279, and serine 313. Positions 414–417 match the Involved in interaction with stylet and aphid transmission motif; it reads KITC. The short motif at 672-674 is the Involved in virions binding and aphid transmission element; the sequence is PTK. Positions 698-820 constitute a Peptidase C6 domain; it reads MYIAKEGYCY…ESSLKHYRVG (123 aa). Catalysis depends on for helper component proteinase activity residues cysteine 706 and histidine 779.

Belongs to the potyviridae P3N-PIPO polyprotein family. As to quaternary structure, interacts (via PIPO domain) with host PCaP1 protein; this interaction may help to anchor the movement complex to the plasma membrane from which the complex could move to the plasmodesmata. In terms of processing, potyviral RNA is expressed as two polyproteins which undergo post-translational proteolytic processing. Genome polyprotein is processed by NIa-pro, P1 and HC-pro proteinases resulting in the production of at least ten individual proteins. P3N-PIPO is cleaved by P1 and HC-pro proteinases resulting in the production of three individual proteins. The P1 proteinase and the HC-pro cleave only their respective C-termini autocatalytically.

The protein localises to the host cell junction. It is found in the host plasmodesma. It catalyses the reaction Hydrolyzes a Gly-|-Gly bond at its own C-terminus, commonly in the sequence -Tyr-Xaa-Val-Gly-|-Gly, in the processing of the potyviral polyprotein.. In terms of biological role, cysteine protease that cleaves a Gly-Gly dipeptide at its own C-terminus. Required for aphid transmission and also has proteolytic activity. Interacts with virions and aphid stylets. Acts as a suppressor of RNA-mediated gene silencing, also known as post-transcriptional gene silencing (PTGS), a mechanism of plant viral defense that limits the accumulation of viral RNAs. May have RNA-binding activity. Its function is as follows. Allows efficient cell to cell propagation, by bypassing the host cell wall barrier. Transports viral genome to neighboring plant cells directly through plasmosdesmata, without any budding. The protein is P3N-PIPO polyprotein of Alliaria petiolata (Garlic mustard).